We begin with the raw amino-acid sequence, 27 residues long: Caerulein precursor fragment R2 (27 aa).

As to expression, expressed by the skin glands.

The protein resides in the secreted. Functionally, antimicrobial peptide. This Xenopus ruwenzoriensis (Uganda clawed frog) protein is Caerulein precursor fragment R2.